Reading from the N-terminus, the 212-residue chain is Protein RER1C (212 aa).

Methionine 1 bears the N-acetylmethionine mark. 4 consecutive transmembrane segments (helical) span residues 55 to 75, 82 to 102, 135 to 155, and 157 to 177; these read TVPH…IYIV, GFYI…IAFL, EFKF…MTFF, and VFDV…LFFL.

The protein belongs to the RER1 family.

The protein localises to the membrane. Its function is as follows. Involved in the retrieval of endoplasmic reticulum membrane proteins from the early Golgi compartment. The protein is Protein RER1C (RER1C) of Arabidopsis thaliana (Mouse-ear cress).